Here is a 549-residue protein sequence, read N- to C-terminus: Ribosomal protein S6 kinase-like 1 (549 aa).

Positions 87–115 (IHVDPNKERREAVKLKITKYLRRAEEIFN) constitute an MIT domain. The 395-residue stretch at 145–539 (SAVEQLRGCR…VSKLKSHPFF (395 aa)) folds into the Protein kinase domain. Residues 151-159 (RGCRVVGVI) and lysine 177 contribute to the ATP site. A disordered region spans residues 260–325 (LTPARLPSGH…SDLPKAPGGH (66 aa)). Aspartate 412 functions as the Proton acceptor in the catalytic mechanism.

The protein belongs to the protein kinase superfamily. Ser/Thr protein kinase family. S6 kinase subfamily.

It carries out the reaction L-seryl-[protein] + ATP = O-phospho-L-seryl-[protein] + ADP + H(+). It catalyses the reaction L-threonyl-[protein] + ATP = O-phospho-L-threonyl-[protein] + ADP + H(+). This is Ribosomal protein S6 kinase-like 1 (RPS6KL1) from Pongo abelii (Sumatran orangutan).